The primary structure comprises 863 residues: Leucine-rich repeat and death domain-containing protein 1 (863 aa).

Disordered regions lie at residues 1–37 (MSEK…KETS) and 51–100 (SSNQ…SQSL). Residues 88 to 100 (SETSTRTETSQSL) show a composition bias toward low complexity. 26 LRR repeats span residues 143–166 (CKDN…ILKI), 167–189 (KYVK…DSGD), 190–213 (LLGL…IQLL), 214–236 (HNLR…ISQL), 238–259 (NIRQ…LECL), 260–282 (GNLE…LPSL), 284–305 (YLRV…LCFL), 306–328 (PKLI…IREL), 329–351 (KNLE…IFQL), 353–374 (KIKE…IENF), 375–397 (RELR…ICCC), 398–420 (AMLE…IHKL), 422–443 (NLRK…ISHL), 445–466 (NICS…IKNC), 468–489 (KIIK…LCAL), 490–513 (DSLY…SFSK), 515–535 (LLHL…FCSL), 536–558 (INLK…ISNM), 560–581 (SLHV…LCTL), 582–604 (ENLR…ICNL), 606–627 (RIQK…LCQL), 630–653 (LEQL…LSNM), 654–676 (TQLK…IGEL), 678–699 (NLVS…LLSL), 700–722 (NDLQ…IYNL), and 724–745 (SLKE…ICKG). In terms of domain architecture, Death spans 767-855 (EKIFKIVANN…EIMDKITALN (89 aa)). One copy of the LRR 27 repeat lies at 856–863 (LFTRAIKF).

The sequence is that of Leucine-rich repeat and death domain-containing protein 1 (LRRD1) from Macaca fascicularis (Crab-eating macaque).